Reading from the N-terminus, the 141-residue chain is Large ribosomal subunit protein uL11 (141 aa).

This sequence belongs to the universal ribosomal protein uL11 family. In terms of assembly, part of the ribosomal stalk of the 50S ribosomal subunit. Interacts with L10 and the large rRNA to form the base of the stalk. L10 forms an elongated spine to which L12 dimers bind in a sequential fashion forming a multimeric L10(L12)X complex. One or more lysine residues are methylated.

Functionally, forms part of the ribosomal stalk which helps the ribosome interact with GTP-bound translation factors. In Chlorobium chlorochromatii (strain CaD3), this protein is Large ribosomal subunit protein uL11.